Reading from the N-terminus, the 95-residue chain is Secretoglobin family 2A member 1 (95 aa).

Positions 1–18 (MKLVFLFLLVTIPICCYA) are cleaved as a signal peptide. N-linked (GlcNAc...) asparagine glycans are attached at residues asparagine 35 and asparagine 72.

The protein belongs to the secretoglobin family. Lipophilin subfamily. In terms of assembly, prostatein is composed of three different peptides called C1, C2 and C3. These form covalent C1:C3 (F) and C2:C3 (S) heterodimers whose non-covalent association forms tetrameric (C1:C3/C3:C2) prostatein molecules. Expressed at very low level in ventral prostate.

Its subcellular location is the secreted. Functionally, part of prostatein which is the major secretory glycoprotein of ventral prostate gland. Steroid-binding protein; can bind non-polar steroids, cholesterol and a group of small proline-rich peptides. The protein is Secretoglobin family 2A member 1 of Rattus norvegicus (Rat).